Here is a 271-residue protein sequence, read N- to C-terminus: Tryptophan synthase alpha chain (271 aa).

Residues Glu49 and Asp60 each act as proton acceptor in the active site.

It belongs to the TrpA family. In terms of assembly, tetramer of two alpha and two beta chains.

The enzyme catalyses (1S,2R)-1-C-(indol-3-yl)glycerol 3-phosphate + L-serine = D-glyceraldehyde 3-phosphate + L-tryptophan + H2O. It functions in the pathway amino-acid biosynthesis; L-tryptophan biosynthesis; L-tryptophan from chorismate: step 5/5. Functionally, the alpha subunit is responsible for the aldol cleavage of indoleglycerol phosphate to indole and glyceraldehyde 3-phosphate. The chain is Tryptophan synthase alpha chain from Yersinia pestis bv. Antiqua (strain Angola).